The sequence spans 1085 residues: SLIT-ROBO Rho GTPase-activating protein 1 (1085 aa).

An F-BAR domain is found at 19 to 314; that stretch reads SQVKEIRAQL…AVDNLEPRSD (296 aa). Positions 351 to 390 form a coiled coil; it reads VQAELMLRYQQLQSRLATLKIENEEVKKTTEATLQTIQDM. At S416 the chain carries Phosphoserine. Residues 475-496 form a disordered region; it reads YMTTRPPNVPPKPQKHRKSRPR. The region spanning 506-694 is the Rho-GAP domain; the sequence is GDLETFVKDS…TIIIHHETIF (189 aa). In terms of domain architecture, SH3 spans 743 to 802; sequence CEPIEAIAKFDYVGRSARELSFKKGASLLLYHRASEDWWEGRHNGIDGLVPHQYIVVQDM. Residues 808–822 show a composition bias toward polar residues; sequence DTLSQKADSEASSGP. Residues 808 to 954 form a disordered region; the sequence is DTLSQKADSE…TGFNDHKPLD (147 aa). A phosphoserine mark is found at S835 and S917. Basic and acidic residues predominate over residues 922–931; the sequence is SRHDSLKKID. At S932 the chain carries Phosphoserine. Polar residues predominate over residues 937–946; the sequence is RSTSSGQYTG. Residues 956–985 are a coiled coil; that stretch reads ETIAQDIEETMNTALNELRELERQSTAKHA. The span at 997–1011 shows a compositional bias: polar residues; sequence KNSPTPATSTESLSP. Disordered regions lie at residues 997–1038 and 1051–1085; these read KNSP…MSTF and KPPALRPKPAVLPKTNPTIGPAPPPQGPTDKSCTM. Position 999 is a phosphoserine (S999). T1001 bears the Phosphothreonine mark. A compositionally biased stretch (low complexity) spans 1027–1037; sequence STSSSSDTMST. S1032 is subject to Phosphoserine.

Homodimer. Forms a heterooligomer with SRGAP2 and SRGAP3 through its F-BAR domain. Interacts with ROBO1, CDC42 and RHOA. Interacts with FASLG. In terms of tissue distribution, expressed in brain, lung, kidney, and testis.

In terms of biological role, GTPase-activating protein for RhoA and Cdc42 small GTPases. Together with CDC42 seems to be involved in the pathway mediating the repulsive signaling of Robo and Slit proteins in neuronal migration. SLIT2, probably through interaction with ROBO1, increases the interaction of SRGAP1 with ROBO1 and inactivates CDC42. In Homo sapiens (Human), this protein is SLIT-ROBO Rho GTPase-activating protein 1 (SRGAP1).